A 313-amino-acid chain; its full sequence is tRNA dimethylallyltransferase (313 aa).

11-18 (GPTASGKT) contributes to the ATP binding site. 13 to 18 (TASGKT) is a substrate binding site. 2 interaction with substrate tRNA regions span residues 36-39 (DSRQ) and 160-164 (QRLIR).

This sequence belongs to the IPP transferase family. In terms of assembly, monomer. Mg(2+) serves as cofactor.

The catalysed reaction is adenosine(37) in tRNA + dimethylallyl diphosphate = N(6)-dimethylallyladenosine(37) in tRNA + diphosphate. Catalyzes the transfer of a dimethylallyl group onto the adenine at position 37 in tRNAs that read codons beginning with uridine, leading to the formation of N6-(dimethylallyl)adenosine (i(6)A). This chain is tRNA dimethylallyltransferase, found in Chlorobaculum parvum (strain DSM 263 / NCIMB 8327) (Chlorobium vibrioforme subsp. thiosulfatophilum).